Consider the following 229-residue polypeptide: MGGRMWLPFPVLLLSALPAALLRGAAGFTPSLDSDFTFTLPAGRKECFYQPMPLKASLEIEYQVLDGGELDIDFHLTSPEGRTLVFEQRKSDGVHTIETEDGDYMFCFDNTFSTISEKVIFFELILDNMGEEVQGQEDWKKYITNTDVLEMKLEDILESINSIKSRLSKSGHIQTLLRAFEARDRNIQESNFDRVNFWSVVNLMVMVVVSAIQVYTLKSLFEDKRKSRT.

The signal sequence occupies residues 1 to 27 (MGGRMWLPFPVLLLSALPAALLRGAAG). At 28–196 (FTPSLDSDFT…IQESNFDRVN (169 aa)) the chain is on the lumenal side. Positions 45–126 (KECFYQPMPL…EKVIFFELIL (82 aa)) constitute a GOLD domain. A helical transmembrane segment spans residues 197 to 217 (FWSVVNLMVMVVVSAIQVYTL). Topologically, residues 218-229 (KSLFEDKRKSRT) are cytoplasmic.

The protein belongs to the EMP24/GP25L family. As to quaternary structure, interacts with TMED9 and TMED10.

The protein resides in the endoplasmic reticulum membrane. The protein localises to the golgi apparatus. It localises to the cis-Golgi network membrane. Its subcellular location is the endoplasmic reticulum-Golgi intermediate compartment membrane. Its function is as follows. Potential role in vesicular protein trafficking, mainly in the early secretory pathway. Required for the maintenance of the Golgi apparatus; involved in protein exchange between Golgi stacks during assembly. Probably not required for COPI-vesicle-mediated retrograde transport. The sequence is that of Transmembrane emp24 domain-containing protein 5 (Tmed5) from Mus musculus (Mouse).